A 205-amino-acid polypeptide reads, in one-letter code: High frequency lysogenization protein HflD homolog (205 aa).

The protein belongs to the HflD family.

The protein resides in the cytoplasm. It is found in the cell inner membrane. This Shewanella oneidensis (strain ATCC 700550 / JCM 31522 / CIP 106686 / LMG 19005 / NCIMB 14063 / MR-1) protein is High frequency lysogenization protein HflD homolog.